A 959-amino-acid chain; its full sequence is Probable LRR receptor-like serine/threonine-protein kinase At5g37450 (959 aa).

Residues 1 to 24 (MKEMMGVVGIILVVSSCCLSLLDA) form the signal peptide. Residues 25 to 565 (QEITHPTDVS…SGMSIGVSVG (541 aa)) lie on the Extracellular side of the membrane. Asn62, Asn88, Asn102, and Asn123 each carry an N-linked (GlcNAc...) asparagine glycan. LRR repeat units follow at residues 79–100 (VKEL…LGLL), 101–124 (SNLT…LGNL), 125–148 (THLI…LGSL), 149–172 (SNLL…LANL), 173–198 (KKLK…TLTN), 200–220 (LHFL…LAQM), 221–244 (PSLR…SYGS), 246–268 (PNLV…LSKS), and 269–292 (LVLY…KFSA). Asn182 carries an N-linked (GlcNAc...) asparagine glycan. N-linked (GlcNAc...) asparagine glycosylation is found at Asn293, Asn311, Asn327, Asn358, Asn369, and Asn510. LRR repeat units lie at residues 294–314 (ITTI…NFSG), 315–338 (LPRL…IWEN), and 341–366 (LKAE…LLNP). A helical transmembrane segment spans residues 566–586 (IIIGAIAFFLVLSSLALVFFI). The Cytoplasmic segment spans residues 587–959 (KRSKRKRKTR…SGVIPSIAPR (373 aa)). A Protein kinase domain is found at 631 to 906 (FSDLSQIGRG…RELENIYGLI (276 aa)). ATP-binding positions include 637 to 645 (IGRGGYGKV) and Lys659. Residue Asp755 is the Proton acceptor of the active site.

Belongs to the protein kinase superfamily. Ser/Thr protein kinase family.

It is found in the membrane. The enzyme catalyses L-seryl-[protein] + ATP = O-phospho-L-seryl-[protein] + ADP + H(+). It catalyses the reaction L-threonyl-[protein] + ATP = O-phospho-L-threonyl-[protein] + ADP + H(+). This chain is Probable LRR receptor-like serine/threonine-protein kinase At5g37450, found in Arabidopsis thaliana (Mouse-ear cress).